The primary structure comprises 192 residues: Large ribosomal subunit protein uL5 (192 aa).

Belongs to the universal ribosomal protein uL5 family. Part of the 50S ribosomal subunit; part of the 5S rRNA/L5/L18/L25 subcomplex. Contacts the 5S rRNA and the P site tRNA. Forms a bridge to the 30S subunit in the 70S ribosome.

In terms of biological role, this is one of the proteins that bind and probably mediate the attachment of the 5S RNA into the large ribosomal subunit, where it forms part of the central protuberance. In the 70S ribosome it contacts protein S13 of the 30S subunit (bridge B1b), connecting the 2 subunits; this bridge is implicated in subunit movement. Contacts the P site tRNA; the 5S rRNA and some of its associated proteins might help stabilize positioning of ribosome-bound tRNAs. This is Large ribosomal subunit protein uL5 from Mesorhizobium japonicum (strain LMG 29417 / CECT 9101 / MAFF 303099) (Mesorhizobium loti (strain MAFF 303099)).